The chain runs to 206 residues: Adenylyl-sulfate kinase (206 aa).

Gly31–Ser38 contributes to the ATP binding site. The Phosphoserine intermediate role is filled by Ser105.

This sequence belongs to the APS kinase family.

It catalyses the reaction adenosine 5'-phosphosulfate + ATP = 3'-phosphoadenylyl sulfate + ADP + H(+). It participates in sulfur metabolism; hydrogen sulfide biosynthesis; sulfite from sulfate: step 2/3. Its function is as follows. Catalyzes the synthesis of activated sulfate. This Emericella nidulans (strain FGSC A4 / ATCC 38163 / CBS 112.46 / NRRL 194 / M139) (Aspergillus nidulans) protein is Adenylyl-sulfate kinase (sD).